Consider the following 110-residue polypeptide: Small ribosomal subunit protein bS16 (110 aa).

The segment at 87 to 110 (ARNNPEKAVPRKERKAAAEAAAKK) is disordered.

Belongs to the bacterial ribosomal protein bS16 family.

In Rhodopseudomonas palustris (strain BisA53), this protein is Small ribosomal subunit protein bS16.